Consider the following 1441-residue polypeptide: Envelopment polyprotein (1441 aa).

Residues 1–13 (MICILVLITVAAA) form the signal peptide. Residues 14–200 (SPVYQRCFQD…GSIANSICQN (187 aa)) are Lumenal-facing. N-linked (GlcNAc...) asparagine; by host glycosylation is present at asparagine 57. A membrane pass occupies residues 201–221 (IEIIILVTLTLLIFILLSILS). Residues 222–305 (KTYICYLLMP…RAARVMCKSK (84 aa)) lie on the Cytoplasmic side of the membrane. A membrane pass occupies residues 306–326 (GPASILSIITAVLVLTFVTPI). The Lumenal portion of the chain corresponds to 327–361 (NSMVLGESKETFELEDLPDDMLEMASRINSYYLTC). The chain crosses the lipid bilayer at residues 362–382 (ILNYAVSWGLVIIGLLIGLLF). Topologically, residues 383–450 (KKYQHRFLNV…NCLVQYKAKW (68 aa)) are cytoplasmic. Over 451-471 (MMNFLIIYIFLILIKDSAIVV) the chain traverses the membrane. Residues 472–1395 (QAAGTDFTTC…EPFKNLFGSY (924 aa)) are Lumenal-facing. The N-linked (GlcNAc...) asparagine; by host glycan is linked to asparagine 490. Residues 1066–1087 (WGCEEFGCLAVSDGCVFGSCQD) are fusion peptide. The N-linked (GlcNAc...) asparagine; by host glycan is linked to asparagine 1177. The hydrophobic stretch at 1396–1416 (IGIFYTFIISIVVLLVIIYVL) threads the membrane. Topologically, residues 1417-1433 (LPICFKLRDTLRKHEDA) are cytoplasmic.

Belongs to the orthobunyaviruses M polyprotein family. Glycoprotein C and Glycoprotein N interact with each other.

Its subcellular location is the virion membrane. It localises to the host Golgi apparatus membrane. It is found in the host endoplasmic reticulum membrane. In terms of biological role, glycoprotein C and glycoprotein N interact with each other and are present at the surface of the virion. They are able to attach the virion to a cell receptor and to promote fusion of membranes after endocytosis of the virion. This chain is Envelopment polyprotein (GP), found in Bunyavirus La Crosse (isolate Human/United States/L78/1978).